Here is a 321-residue protein sequence, read N- to C-terminus: NADH-quinone oxidoreductase subunit H (321 aa).

A run of 8 helical transmembrane segments spans residues 9–29 (LLAI…GAYM), 78–98 (IIFT…FAIM), 111–131 (IGIL…LLGG), 156–176 (FLGL…ISTI), 183–203 (IWNI…GLAI), 234–254 (FFIG…TLFF), 262–282 (LPPY…FILI), and 296–316 (ILGW…TAIV).

Belongs to the complex I subunit 1 family. In terms of assembly, NDH-1 is composed of 14 different subunits. Subunits NuoA, H, J, K, L, M, N constitute the membrane sector of the complex.

Its subcellular location is the cell membrane. The enzyme catalyses a quinone + NADH + 5 H(+)(in) = a quinol + NAD(+) + 4 H(+)(out). NDH-1 shuttles electrons from NADH, via FMN and iron-sulfur (Fe-S) centers, to quinones in the respiratory chain. The immediate electron acceptor for the enzyme in this species is believed to be ubiquinone. Couples the redox reaction to proton translocation (for every two electrons transferred, four hydrogen ions are translocated across the cytoplasmic membrane), and thus conserves the redox energy in a proton gradient. This subunit may bind ubiquinone. This Baumannia cicadellinicola subsp. Homalodisca coagulata protein is NADH-quinone oxidoreductase subunit H.